Here is a 307-residue protein sequence, read N- to C-terminus: UDP-3-O-acyl-N-acetylglucosamine deacetylase (307 aa).

Zn(2+) is bound by residues histidine 78, histidine 241, and aspartate 245. Catalysis depends on histidine 268, which acts as the Proton donor.

This sequence belongs to the LpxC family. Zn(2+) serves as cofactor.

It catalyses the reaction a UDP-3-O-[(3R)-3-hydroxyacyl]-N-acetyl-alpha-D-glucosamine + H2O = a UDP-3-O-[(3R)-3-hydroxyacyl]-alpha-D-glucosamine + acetate. It functions in the pathway glycolipid biosynthesis; lipid IV(A) biosynthesis; lipid IV(A) from (3R)-3-hydroxytetradecanoyl-[acyl-carrier-protein] and UDP-N-acetyl-alpha-D-glucosamine: step 2/6. Functionally, catalyzes the hydrolysis of UDP-3-O-myristoyl-N-acetylglucosamine to form UDP-3-O-myristoylglucosamine and acetate, the committed step in lipid A biosynthesis. This Bordetella avium (strain 197N) protein is UDP-3-O-acyl-N-acetylglucosamine deacetylase.